The primary structure comprises 205 residues: Imidazoleglycerol-phosphate dehydratase (205 aa).

Belongs to the imidazoleglycerol-phosphate dehydratase family.

The protein resides in the cytoplasm. The catalysed reaction is D-erythro-1-(imidazol-4-yl)glycerol 3-phosphate = 3-(imidazol-4-yl)-2-oxopropyl phosphate + H2O. It participates in amino-acid biosynthesis; L-histidine biosynthesis; L-histidine from 5-phospho-alpha-D-ribose 1-diphosphate: step 6/9. This is Imidazoleglycerol-phosphate dehydratase from Chloroflexus aurantiacus (strain ATCC 29366 / DSM 635 / J-10-fl).